We begin with the raw amino-acid sequence, 549 residues long: Glucose-6-phosphate isomerase (549 aa).

Glutamate 355 serves as the catalytic Proton donor. Residues histidine 386 and lysine 514 contribute to the active site.

The protein belongs to the GPI family.

It localises to the cytoplasm. It catalyses the reaction alpha-D-glucose 6-phosphate = beta-D-fructose 6-phosphate. It participates in carbohydrate biosynthesis; gluconeogenesis. The protein operates within carbohydrate degradation; glycolysis; D-glyceraldehyde 3-phosphate and glycerone phosphate from D-glucose: step 2/4. Catalyzes the reversible isomerization of glucose-6-phosphate to fructose-6-phosphate. The chain is Glucose-6-phosphate isomerase from Salmonella enteritidis PT4 (strain P125109).